The primary structure comprises 432 residues: Cyclic 2,3-diphosphoglycerate synthetase (432 aa).

Belongs to the cyclic 2,3-diphosphoglycerate synthetase family.

The protein localises to the cytoplasm. The enzyme catalyses (2R)-2,3-bisphosphoglycerate + ATP + H(+) = cyclic (2R)-2,3-bisphosphoglycerate + ADP + phosphate. Its function is as follows. Catalyzes the formation of cyclic 2,3-diphosphoglycerate (cDPG) by formation of an intramolecular phosphoanhydride bond at the expense of ATP. The chain is Cyclic 2,3-diphosphoglycerate synthetase from Thermococcus kodakarensis (strain ATCC BAA-918 / JCM 12380 / KOD1) (Pyrococcus kodakaraensis (strain KOD1)).